Consider the following 184-residue polypeptide: Photosystem I assembly protein Ycf4 (184 aa).

Transmembrane regions (helical) follow at residues 19–39 (ISNF…LLVG) and 57–77 (IIFF…LFIS).

It belongs to the Ycf4 family.

Its subcellular location is the plastid. The protein localises to the chloroplast thylakoid membrane. Its function is as follows. Seems to be required for the assembly of the photosystem I complex. The polypeptide is Photosystem I assembly protein Ycf4 (Drimys granadensis).